The primary structure comprises 972 residues: Glycine dehydrogenase (decarboxylating) (972 aa).

Lysine 713 bears the N6-(pyridoxal phosphate)lysine mark.

This sequence belongs to the GcvP family. The glycine cleavage system is composed of four proteins: P, T, L and H. It depends on pyridoxal 5'-phosphate as a cofactor.

It carries out the reaction N(6)-[(R)-lipoyl]-L-lysyl-[glycine-cleavage complex H protein] + glycine + H(+) = N(6)-[(R)-S(8)-aminomethyldihydrolipoyl]-L-lysyl-[glycine-cleavage complex H protein] + CO2. Functionally, the glycine cleavage system catalyzes the degradation of glycine. The P protein binds the alpha-amino group of glycine through its pyridoxal phosphate cofactor; CO(2) is released and the remaining methylamine moiety is then transferred to the lipoamide cofactor of the H protein. The polypeptide is Glycine dehydrogenase (decarboxylating) (Aromatoleum aromaticum (strain DSM 19018 / LMG 30748 / EbN1) (Azoarcus sp. (strain EbN1))).